A 561-amino-acid chain; its full sequence is MDEDSVHGDSHLKTCVVLGGRGFIGRSLVSRLLRLGNWTVRVADSGHTLHLDESDSLLEDALSSGRASYHCVDVRDKPQIVKVTEGSYVVFYMGATDLRSHDYFDCYKVIVQGTRNVISACRESGVRKLIYNSTADVVFDGSQPIRDGDESLRRPLKFQSMLTDFKAQAEALIKLANNRDGLLTCALRSSIVFGPGDTEFVPFLVNLAKSGYAKFILGSGENISDFTYSENVSHAHICAVKALDSQMEFVAGKEFFITNLKPVRFWDFVSHIVEGLGYPRPSIKLPVRLVLYVFSLLKWTHEKEGLGSNYDTAHQYALLASSTRTFNCNAAKKHLGYTPVVTLEDGIASTLQWFSRDLEKSDDTIIQSTADQLLGCGKVADILLWRNEKKTFVSFLVLNLFYYWFFFSGNTFTSSAAQLLFIFAVALYGVSFVPSKIFGFQVNKIPPWRFEISESAVRDLSSDIVVVWNQGVRSFKSLSSGGDWIKFFKIAGSLYLLKLIVSRSLAAFLFTVMSFSFTGFFIYEQYELELYHLARIFVECLTFIKRMVIPVSDASSKPMFM.

Residue Lys-166 coordinates NAD(+). One can recognise a Reticulon domain in the interval 379–561 (VADILLWRNE…SDASSKPMFM (183 aa)). The next 3 helical transmembrane spans lie at 392–412 (FVSFLVLNLFYYWFFFSGNTF), 420–440 (LFIFAVALYGVSFVPSKIFGF), and 504–524 (SLAAFLFTVMSFSFTGFFIYE).

Belongs to the 3-beta-HSD family.

The protein localises to the endoplasmic reticulum membrane. The catalysed reaction is a 3beta-hydroxysteroid-4alpha-carboxylate + NADP(+) = a 3-oxosteroid + CO2 + NADPH. It catalyses the reaction a 3beta-hydroxysteroid-4alpha-carboxylate + NAD(+) = a 3-oxosteroid + CO2 + NADH. Its pathway is steroid biosynthesis; zymosterol biosynthesis; zymosterol from lanosterol: step 4/6. The polypeptide is 3beta-hydroxysteroid-dehydrogenase/decarboxylase isoform 3 (3BETAHSD/D3) (Arabidopsis thaliana (Mouse-ear cress)).